The sequence spans 393 residues: Asparagine--oxo-acid transaminase (393 aa).

Residues glycine 39, tryptophan 126, and asparagine 176 each coordinate L-asparagine. Position 239 is an N6-(pyridoxal phosphate)lysine (lysine 239). Arginine 370 serves as a coordination point for L-asparagine.

The protein belongs to the class-I pyridoxal-phosphate-dependent aminotransferase family. Requires pyridoxal 5'-phosphate as cofactor.

The enzyme catalyses a 2-oxocarboxylate + L-asparagine = 2-oxosuccinamate + an L-alpha-amino acid. The catalysed reaction is L-asparagine + 2-oxoglutarate = 2-oxosuccinamate + L-glutamate. In terms of biological role, catalyzes the transamination reaction between L-asparagine and 2-oxoglutarate to produce L-glutamate and 2-oxosuccinamate. Is not active with pyruvate as amine acceptor. May also use other amino acids as substrates. In Streptococcus mutans serotype c (strain ATCC 700610 / UA159), this protein is Asparagine--oxo-acid transaminase.